The following is a 288-amino-acid chain: MNNLSFSELCCLFCCPPCPGKIASKLAFLPPDPTYTLMCDESGSRWTLHLSERADWQYSSREKDAIECFMTRTSKGNRIACMFVRCSPNAKYTLLFSHGNAVDLGQMSSFYIGLGSRINCNIFSYDYSGYGASSGKPSEKNLYADIDAAWVALRTRYGIRPENVIIYGQSIGTVPSVDLAARYESAAVILHSPLTSGMRVAFPDTKKTYCFDAFPNIDKISKITSPVLIIHGTEDEVIDFSHGLALFERCQRPVEPLWVEGAGHNDVELYGQYLERLKRFVSQELVNL.

Catalysis depends on charge relay system residues Ser170, Asp235, and His264.

The protein belongs to the AB hydrolase superfamily. ABHD17 family. In terms of processing, palmitoylated on cysteine residues located in a cysteine cluster at the N-terminus which promotes membrane localization.

It is found in the cell membrane. The protein localises to the recycling endosome membrane. Its subcellular location is the cell projection. It localises to the dendritic spine. The protein resides in the postsynaptic density membrane. It catalyses the reaction S-hexadecanoyl-L-cysteinyl-[protein] + H2O = L-cysteinyl-[protein] + hexadecanoate + H(+). In terms of biological role, hydrolyzes fatty acids from S-acylated cysteine residues in proteins. Has depalmitoylating activity towards NRAS. This chain is Alpha/beta hydrolase domain-containing protein 17B, found in Gallus gallus (Chicken).